The following is a 258-amino-acid chain: MLAKRIIPCLDVRDGQVVKGVQFRNHEIIGDIVPLAKRYADEGADELVFYDITASSDGRVVDKSWVARVAEVIDIPFCVAGGIRSIDDAAKILSFGADKISINSPALADPTLITRLADRFGVQCIVVGIDTWFDDATGKYHVNQYTGDENRTRVTQWETLDWVQEVQQRGAGEIVLNMMNQDGVRNGYDLTQLKKVRDVCRVPLIASGGAGTMEHFLEAFRDADVDGALAASVFHKQIINIGELKAYLAGQGVEIRIC.

Catalysis depends on residues Asp-11 and Asp-130.

The protein belongs to the HisA/HisF family. As to quaternary structure, heterodimer of HisH and HisF.

The protein localises to the cytoplasm. The enzyme catalyses 5-[(5-phospho-1-deoxy-D-ribulos-1-ylimino)methylamino]-1-(5-phospho-beta-D-ribosyl)imidazole-4-carboxamide + L-glutamine = D-erythro-1-(imidazol-4-yl)glycerol 3-phosphate + 5-amino-1-(5-phospho-beta-D-ribosyl)imidazole-4-carboxamide + L-glutamate + H(+). The protein operates within amino-acid biosynthesis; L-histidine biosynthesis; L-histidine from 5-phospho-alpha-D-ribose 1-diphosphate: step 5/9. Its function is as follows. IGPS catalyzes the conversion of PRFAR and glutamine to IGP, AICAR and glutamate. The HisF subunit catalyzes the cyclization activity that produces IGP and AICAR from PRFAR using the ammonia provided by the HisH subunit. The polypeptide is Imidazole glycerol phosphate synthase subunit HisF (hisF) (Salmonella typhi).